We begin with the raw amino-acid sequence, 255 residues long: MDESVDPVELLLRLLIRHKPHLKPYAYRQDSWQRVLDEYNRQTGSRYRQSRTLKTKFRRLKDLFSADRAQFSPSQLKLMGALLDEAPEHPRPRTKFGNESSSSLSSSSFIKSHPGPDPFQQLSSAEHPNNHSSDDEHSGSQPLPLDSITIGIPPTLHTIPMILSKDNDVGKVIKSPKINKGTNRFSETVLPPQMAAEQSWSDSNMELEICLDYLHNELEVIKKRQEDFECKVLNKLNIIEALLSQMRPPSQGDKI.

The tract at residues 87–149 (PEHPRPRTKF…SQPLPLDSIT (63 aa)) is disordered. Residues 128 to 138 (PNNHSSDDEHS) are compositionally biased toward basic and acidic residues.

Its function is as follows. Positive regulator of allophanate-induced genes in S.cerevisiae. The sequence is that of Protein DAL82 (DAL82) from Saccharomyces cerevisiae (strain ATCC 204508 / S288c) (Baker's yeast).